We begin with the raw amino-acid sequence, 231 residues long: UMP-CMP kinase (231 aa).

57–62 (GSGKGT) serves as a coordination point for ATP. The segment at 77–106 (SAGDLLRREIASGSAYGSVILSTIREGKIV) is NMP. A ribonucleoside 5'-phosphate contacts are provided by residues arginine 83, 104-106 (KIV), and 131-134 (GFPR). Asparagine 138 provides a ligand contact to CMP. The LID stretch occupies residues 169–177 (NRNQGRVDD). Arginine 170 serves as a coordination point for ATP. A ribonucleoside 5'-phosphate is bound by residues arginine 174 and arginine 185. Glycine 213 is a binding site for ATP.

It belongs to the adenylate kinase family. UMP-CMP kinase subfamily. As to quaternary structure, monomer. It depends on Mg(2+) as a cofactor.

It localises to the cytoplasm. It is found in the nucleus. It carries out the reaction CMP + ATP = CDP + ADP. The catalysed reaction is dCMP + ATP = dCDP + ADP. The enzyme catalyses UMP + ATP = UDP + ADP. In terms of biological role, catalyzes the phosphorylation of pyrimidine nucleoside monophosphates at the expense of ATP. Plays an important role in de novo pyrimidine nucleotide biosynthesis. Has preference for UMP and CMP as phosphate acceptors. The polypeptide is UMP-CMP kinase (Prunus armeniaca (Apricot)).